The primary structure comprises 317 residues: tRNA pseudouridine synthase B (317 aa).

Catalysis depends on D47, which acts as the Nucleophile.

The protein belongs to the pseudouridine synthase TruB family. Type 1 subfamily.

It catalyses the reaction uridine(55) in tRNA = pseudouridine(55) in tRNA. Responsible for synthesis of pseudouridine from uracil-55 in the psi GC loop of transfer RNAs. The chain is tRNA pseudouridine synthase B from Shewanella sp. (strain MR-7).